A 126-amino-acid chain; its full sequence is MQNLNNKQKTLIIFLGIITFGIFIIYFFTKAKKVSQIRNTHLIVSSNIPFSLNDFYNCIGSKNNLVNVDATINTLKIELKEINALNNEKLKVLGAKGIMCNQTKISIIFGDFCLELKELIKKDLFS.

The helical transmembrane segment at L11–A31 threads the bilayer. The 78-residue stretch at P49–S126 folds into the PTS EIIB type-1 domain.

To M.genitalium MG129 and M.pneumoniae MPN268.

It is found in the membrane. Functionally, the phosphoenolpyruvate-dependent sugar phosphotransferase system (PTS), a major carbohydrate active -transport system, catalyzes the phosphorylation of incoming sugar substrates concomitant with their translocation across the cell membrane. This Ureaplasma parvum serovar 3 (strain ATCC 700970) protein is Putative phosphotransferase enzyme IIB component UU178.